A 241-amino-acid chain; its full sequence is Probable transcriptional regulatory protein azo0574 (241 aa).

The segment at 1–21 (MAGHSKWANIQHRKGRQDAKR) is disordered.

The protein belongs to the TACO1 family.

It is found in the cytoplasm. In Azoarcus sp. (strain BH72), this protein is Probable transcriptional regulatory protein azo0574.